We begin with the raw amino-acid sequence, 278 residues long: UPF0276 protein Ssed_2857 (278 aa).

It belongs to the UPF0276 family.

This chain is UPF0276 protein Ssed_2857, found in Shewanella sediminis (strain HAW-EB3).